We begin with the raw amino-acid sequence, 144 residues long: Large ribosomal subunit protein uL16 (144 aa).

Residues 1-19 show a composition bias toward basic residues; sequence MLLPKRVKYRRQHRPKTTG. Positions 1–23 are disordered; that stretch reads MLLPKRVKYRRQHRPKTTGRSKG.

The protein belongs to the universal ribosomal protein uL16 family. As to quaternary structure, part of the 50S ribosomal subunit.

Binds 23S rRNA and is also seen to make contacts with the A and possibly P site tRNAs. The protein is Large ribosomal subunit protein uL16 of Staphylococcus aureus (strain Mu50 / ATCC 700699).